Consider the following 139-residue polypeptide: Insulin-like growth factor (139 aa).

A signal peptide spans 1-38 (YIRRVRQGSIYSLLVESQQWCKLTLTLLLLLALLTRCT). Positions 39–67 (LSETLCGSELVDTLQFVCDDRGFFFVPQH) are b. Residues 68–82 (VPPRRGAHRRSRARK) are c. The segment at 83 to 103 (GIVEECCFKGCSLRLLEMYCA) is a. Residues 104-113 (RPSKAERDVA) are d. The interval 108 to 139 (AERDVARPRQRPHRASQHSRRGSQSRGRGRSR) is disordered. Positions 114–139 (RPRQRPHRASQHSRRGSQSRGRGRSR) are e. Positions 115–139 (PRQRPHRASQHSRRGSQSRGRGRSR) are enriched in basic residues.

This sequence belongs to the insulin family.

The protein localises to the secreted. The insulin-like growth factors, isolated from plasma, are structurally and functionally related to insulin but have a much higher growth-promoting activity. The protein is Insulin-like growth factor of Myxine glutinosa (Atlantic hagfish).